Reading from the N-terminus, the 347-residue chain is S-adenosylmethionine:tRNA ribosyltransferase-isomerase (347 aa).

This sequence belongs to the QueA family. In terms of assembly, monomer.

The protein resides in the cytoplasm. It carries out the reaction 7-aminomethyl-7-carbaguanosine(34) in tRNA + S-adenosyl-L-methionine = epoxyqueuosine(34) in tRNA + adenine + L-methionine + 2 H(+). It functions in the pathway tRNA modification; tRNA-queuosine biosynthesis. In terms of biological role, transfers and isomerizes the ribose moiety from AdoMet to the 7-aminomethyl group of 7-deazaguanine (preQ1-tRNA) to give epoxyqueuosine (oQ-tRNA). The protein is S-adenosylmethionine:tRNA ribosyltransferase-isomerase of Pseudomonas aeruginosa (strain UCBPP-PA14).